The sequence spans 208 residues: Holliday junction branch migration complex subunit RuvA (208 aa).

The segment at 1-64 (MIGRLHGTVA…DDGQALYGFA (64 aa)) is domain I. Residues 65-143 (SRAERDLFRV…GLLPAASGGV (79 aa)) are domain II. Positions 139 to 162 (ASGGVPARTGSGEQLDAPAGPQGS) are disordered. The segment at 144–157 (PARTGSGEQLDAPA) is flexible linker. The interval 158–208 (GPQGSREDAVSALVALGYKPAEAGRLVNAVPGANDLPSEELIRRALQAAVR) is domain III.

It belongs to the RuvA family. In terms of assembly, homotetramer. Forms an RuvA(8)-RuvB(12)-Holliday junction (HJ) complex. HJ DNA is sandwiched between 2 RuvA tetramers; dsDNA enters through RuvA and exits via RuvB. An RuvB hexamer assembles on each DNA strand where it exits the tetramer. Each RuvB hexamer is contacted by two RuvA subunits (via domain III) on 2 adjacent RuvB subunits; this complex drives branch migration. In the full resolvosome a probable DNA-RuvA(4)-RuvB(12)-RuvC(2) complex forms which resolves the HJ.

It localises to the cytoplasm. Functionally, the RuvA-RuvB-RuvC complex processes Holliday junction (HJ) DNA during genetic recombination and DNA repair, while the RuvA-RuvB complex plays an important role in the rescue of blocked DNA replication forks via replication fork reversal (RFR). RuvA specifically binds to HJ cruciform DNA, conferring on it an open structure. The RuvB hexamer acts as an ATP-dependent pump, pulling dsDNA into and through the RuvAB complex. HJ branch migration allows RuvC to scan DNA until it finds its consensus sequence, where it cleaves and resolves the cruciform DNA. This is Holliday junction branch migration complex subunit RuvA from Alkalilimnicola ehrlichii (strain ATCC BAA-1101 / DSM 17681 / MLHE-1).